A 263-amino-acid polypeptide reads, in one-letter code: Zinc import ATP-binding protein ZnuC (263 aa).

The region spanning 11 to 226 (VELKNINVVF…PTFIHFFGDQ (216 aa)) is the ABC transporter domain. 43–50 (GPNGGGKS) provides a ligand contact to ATP.

This sequence belongs to the ABC transporter superfamily. Zinc importer (TC 3.A.1.15.5) family. As to quaternary structure, the complex is composed of two ATP-binding proteins (ZnuC), two transmembrane proteins (ZnuB) and a solute-binding protein (ZnuA).

It is found in the cell inner membrane. The enzyme catalyses Zn(2+)(out) + ATP(in) + H2O(in) = Zn(2+)(in) + ADP(in) + phosphate(in) + H(+)(in). In terms of biological role, part of the ABC transporter complex ZnuABC involved in zinc import. Responsible for energy coupling to the transport system. This is Zinc import ATP-binding protein ZnuC from Pasteurella multocida (strain Pm70).